Reading from the N-terminus, the 189-residue chain is Hypoxanthine/guanine phosphoribosyltransferase (189 aa).

The protein belongs to the purine/pyrimidine phosphoribosyltransferase family. Archaeal HPRT subfamily. As to quaternary structure, homodimer.

Its subcellular location is the cytoplasm. The enzyme catalyses IMP + diphosphate = hypoxanthine + 5-phospho-alpha-D-ribose 1-diphosphate. The catalysed reaction is GMP + diphosphate = guanine + 5-phospho-alpha-D-ribose 1-diphosphate. The protein operates within purine metabolism; IMP biosynthesis via salvage pathway; IMP from hypoxanthine: step 1/1. Catalyzes a salvage reaction resulting in the formation of IMP that is energically less costly than de novo synthesis. The polypeptide is Hypoxanthine/guanine phosphoribosyltransferase (Methanothermus fervidus (strain ATCC 43054 / DSM 2088 / JCM 10308 / V24 S)).